The following is a 547-amino-acid chain: 2-succinyl-5-enolpyruvyl-6-hydroxy-3-cyclohexene-1-carboxylate synthase (547 aa).

The protein belongs to the TPP enzyme family. MenD subfamily. As to quaternary structure, homodimer. The cofactor is Mg(2+). It depends on Mn(2+) as a cofactor. Thiamine diphosphate serves as cofactor.

It carries out the reaction isochorismate + 2-oxoglutarate + H(+) = 5-enolpyruvoyl-6-hydroxy-2-succinyl-cyclohex-3-ene-1-carboxylate + CO2. Its pathway is quinol/quinone metabolism; 1,4-dihydroxy-2-naphthoate biosynthesis; 1,4-dihydroxy-2-naphthoate from chorismate: step 2/7. It functions in the pathway quinol/quinone metabolism; menaquinone biosynthesis. Its function is as follows. Catalyzes the thiamine diphosphate-dependent decarboxylation of 2-oxoglutarate and the subsequent addition of the resulting succinic semialdehyde-thiamine pyrophosphate anion to isochorismate to yield 2-succinyl-5-enolpyruvyl-6-hydroxy-3-cyclohexene-1-carboxylate (SEPHCHC). The polypeptide is 2-succinyl-5-enolpyruvyl-6-hydroxy-3-cyclohexene-1-carboxylate synthase (Mycobacterium sp. (strain KMS)).